Here is a 618-residue protein sequence, read N- to C-terminus: MKREYQDGGGSGGGGDEMGSSRDKMMVSSSEAGEGEEVDELLAALGYKVRASDMADVAQKLEQLEMAMGMGGPAPDDGFATHLATDTVHYNPTDLSSWVESMLSELNAPPPPLPPAPPQLNASTSSTVTGGGGYFDLPPSVDSSSSTYALRPIISPPVAPADLSADSVRDPKRMRTGGSSTSSSSSSSSSLGGGAARSSVVEAAPPVAAAAAAPALPVVVVDTQEAGIRLVHALLACAEAVQQENLSAAEALVKQIPLLAASQGGAMRKVAAYFGEALARRVFRFRPQPDSSLLDAAFADLLHAHFYESCPYLKFAHFTANQAILEAFAGCRRVHVVDFGIKQGMQWPALLQALALRPGGPPSFRLTGVGPPQPDETDALQQVGWKLAQFAHTIRVDFQYRGLVAATLADLEPFMLQPEGEEDPNEEPEVIAVNSVFEMHRLLAQPGALEKVLGTVRAVRPRIVTVVEQEANHNSGSFLDRFTESLHYYSTMFDSLEGGSSGGPSEVSSGGAAPAAAAGTDQVMSEVYLGRQICNVVACEGTERTERHETLGQWRNRLGNAGFETVHLGSNAYKQASTLLALFAGGDGYKVEEKEGCLTLGWHTRPLIATSAWRLAAP.

Residues 1-36 are disordered; it reads MKREYQDGGGSGGGGDEMGSSRDKMMVSSSEAGEGE. The segment covering 7 to 17 has biased composition (gly residues); it reads DGGGSGGGGDE. Residues 39-43 carry the DELLA motif motif; the sequence is DELLA. Disordered regions lie at residues 106 to 137 and 159 to 197; these read LNAP…YFDL and APAD…GAAR. Residues 108–118 are compositionally biased toward pro residues; it reads APPPPLPPAPP. 2 stretches are compositionally biased toward low complexity: residues 119–128 and 176–197; these read QLNASTSSTV and TGGS…GAAR. The region spanning 221–614 is the GRAS domain; sequence VDTQEAGIRL…RPLIATSAWR (394 aa). Residues 228-284 are leucine repeat I (LRI); the sequence is IRLVHALLACAEAVQQENLSAAEALVKQIPLLAASQGGAMRKVAAYFGEALARRVFR. The short motif at 235-239 is the LxCxE motif element; sequence LACAE. The tract at residues 303–368 is VHIID; that stretch reads HAHFYESCPY…GGPPSFRLTG (66 aa). Positions 334–338 match the VHIID motif; the sequence is VHVVD. The interval 382–421 is leucine repeat II (LRII); it reads QVGWKLAQFAHTIRVDFQYRGLVAATLADLEPFMLQPEGE. Positions 431–535 are PFYRE; the sequence is IAVNSVFEMH…EVYLGRQICN (105 aa). Positions 538-614 are SAW; that stretch reads ACEGTERTER…RPLIATSAWR (77 aa).

This sequence belongs to the GRAS family. DELLA subfamily. Phosphorylated. Post-translationally, ubiquitinated. Upon GA application it is ubiquitinated, leading to its subsequent degradation. Apparently restricted to regions where growth is occurring in the leaf blade. Localizes almost exclusively to the basal elongation zone (EZ) for the elongating blades of L1, L2 and L3. More detailed fractionation of the L3 blade shows that in cv. Himalaya, it is preferentially localized to the basal third of the EZ, but its presence can still be detected toward the end of the EZ (at protein level).

The protein localises to the nucleus. Its function is as follows. Probable transcriptional regulator that acts as a repressor of the gibberellin (GA) signaling pathway. Probably acts by participating in large multiprotein complexes that repress transcription of GA-inducible genes. Upon GA application, it is degraded by the proteasome, allowing the GA signaling pathway. Acts as a negative regulator of GAMYB gene expression. The polypeptide is DELLA protein SLN1 (SLN1) (Hordeum vulgare (Barley)).